A 203-amino-acid polypeptide reads, in one-letter code: Arcadin-2 (203 aa).

As to quaternary structure, interacts with crenactin.

The protein localises to the cytoplasm. It localises to the cytoskeleton. Its function is as follows. Part of an actin-like archaeal cytoskeleton. Prevents polymerization of crenactin filaments by binding its C-terminus into crenactin's hydrophobic groove. May act by competing with the D-loop of the following crenactin subunit for the hydrophobic groove. The chain is Arcadin-2 from Pyrobaculum calidifontis (strain DSM 21063 / JCM 11548 / VA1).